The sequence spans 254 residues: Phosphoribosylaminoimidazole-succinocarboxamide synthase (254 aa).

The protein belongs to the SAICAR synthetase family.

It carries out the reaction 5-amino-1-(5-phospho-D-ribosyl)imidazole-4-carboxylate + L-aspartate + ATP = (2S)-2-[5-amino-1-(5-phospho-beta-D-ribosyl)imidazole-4-carboxamido]succinate + ADP + phosphate + 2 H(+). The protein operates within purine metabolism; IMP biosynthesis via de novo pathway; 5-amino-1-(5-phospho-D-ribosyl)imidazole-4-carboxamide from 5-amino-1-(5-phospho-D-ribosyl)imidazole-4-carboxylate: step 1/2. In Brucella anthropi (strain ATCC 49188 / DSM 6882 / CCUG 24695 / JCM 21032 / LMG 3331 / NBRC 15819 / NCTC 12168 / Alc 37) (Ochrobactrum anthropi), this protein is Phosphoribosylaminoimidazole-succinocarboxamide synthase.